A 338-amino-acid chain; its full sequence is Phenylalanine--tRNA ligase alpha subunit (338 aa).

Residue glutamate 252 coordinates Mg(2+).

This sequence belongs to the class-II aminoacyl-tRNA synthetase family. Phe-tRNA synthetase alpha subunit type 1 subfamily. In terms of assembly, tetramer of two alpha and two beta subunits. It depends on Mg(2+) as a cofactor.

The protein resides in the cytoplasm. The catalysed reaction is tRNA(Phe) + L-phenylalanine + ATP = L-phenylalanyl-tRNA(Phe) + AMP + diphosphate + H(+). This chain is Phenylalanine--tRNA ligase alpha subunit, found in Pseudomonas syringae pv. syringae (strain B728a).